Here is a 114-residue protein sequence, read N- to C-terminus: Probable acid stress chaperone HdeA (114 aa).

Residues 1–26 form the signal peptide; that stretch reads MIKALFNKNTALAAVAILALSGGAMA. Cys-46 and Cys-94 are joined by a disulfide.

It belongs to the HdeA family.

Its subcellular location is the periplasm. Required for optimal acid stress protection. Exhibits a chaperone-like activity only at low pH by suppressing non-specifically the aggregation of denaturated periplasmic proteins. Contributes to acid resistance. Not required for wild-type virulence in the BALB/c mouse model. The polypeptide is Probable acid stress chaperone HdeA (Brucella abortus (strain 2308)).